The sequence spans 298 residues: UDP-3-O-acyl-N-acetylglucosamine deacetylase (298 aa).

3 residues coordinate Zn(2+): His-75, His-232, and Asp-236. His-259 (proton donor) is an active-site residue.

This sequence belongs to the LpxC family. The cofactor is Zn(2+).

It catalyses the reaction a UDP-3-O-[(3R)-3-hydroxyacyl]-N-acetyl-alpha-D-glucosamine + H2O = a UDP-3-O-[(3R)-3-hydroxyacyl]-alpha-D-glucosamine + acetate. It participates in glycolipid biosynthesis; lipid IV(A) biosynthesis; lipid IV(A) from (3R)-3-hydroxytetradecanoyl-[acyl-carrier-protein] and UDP-N-acetyl-alpha-D-glucosamine: step 2/6. Functionally, catalyzes the hydrolysis of UDP-3-O-myristoyl-N-acetylglucosamine to form UDP-3-O-myristoylglucosamine and acetate, the committed step in lipid A biosynthesis. The sequence is that of UDP-3-O-acyl-N-acetylglucosamine deacetylase from Nitratiruptor sp. (strain SB155-2).